Reading from the N-terminus, the 130-residue chain is MAKRKIVKKKVVRKSIAKGIVYISATFNNTMVTVTDEMGNAIAWSSAGGLGFKGSKKSTPYAAQQAVEDALNKAKEHGIKEVGIKVQGPGSGRETAVKSVGAVEGIKVTFLKDITPLAHNGCRPPKRRRV.

The protein belongs to the universal ribosomal protein uS11 family. Part of the 30S ribosomal subunit. Interacts with proteins S7 and S18. Binds to IF-3.

Its function is as follows. Located on the platform of the 30S subunit, it bridges several disparate RNA helices of the 16S rRNA. Forms part of the Shine-Dalgarno cleft in the 70S ribosome. This chain is Small ribosomal subunit protein uS11, found in Campylobacter curvus (strain 525.92).